The sequence spans 93 residues: Small ribosomal subunit protein uS17 (93 aa).

Belongs to the universal ribosomal protein uS17 family. Part of the 30S ribosomal subunit.

One of the primary rRNA binding proteins, it binds specifically to the 5'-end of 16S ribosomal RNA. This Bordetella avium (strain 197N) protein is Small ribosomal subunit protein uS17.